We begin with the raw amino-acid sequence, 310 residues long: UDP-N-acetylenolpyruvoylglucosamine reductase (310 aa).

Positions 35–199 (VGGPAQALFT…TSARFRGTPA (165 aa)) constitute an FAD-binding PCMH-type domain. Arginine 179 is an active-site residue. The Proton donor role is filled by serine 228. Glutamate 298 is a catalytic residue.

Belongs to the MurB family. FAD is required as a cofactor.

The protein resides in the cytoplasm. It catalyses the reaction UDP-N-acetyl-alpha-D-muramate + NADP(+) = UDP-N-acetyl-3-O-(1-carboxyvinyl)-alpha-D-glucosamine + NADPH + H(+). It functions in the pathway cell wall biogenesis; peptidoglycan biosynthesis. Its function is as follows. Cell wall formation. The polypeptide is UDP-N-acetylenolpyruvoylglucosamine reductase (Rhodopseudomonas palustris (strain BisB5)).